Reading from the N-terminus, the 165-residue chain is uncharacterized protein (165 aa).

Positions 1 to 38 (MFTVKEKNRQELEEELNDLEFQIYRMQENMKDLSKDAK) form a coiled coil.

This is an uncharacterized protein from Bacillus subtilis (strain 168).